The following is a 363-amino-acid chain: Glycerol-3-phosphate dehydrogenase [NAD(+)], cytoplasmic (363 aa).

NAD(+)-binding positions include 11-16 (GSGNWG), Phe-98, Lys-121, and Ala-155. Substrate is bound at residue Lys-121. Lys-206 functions as the Proton acceptor in the catalytic mechanism. Residues Arg-270 and Gln-299 each contribute to the NAD(+) site. Substrate is bound at residue 270 to 271 (RN).

It belongs to the NAD-dependent glycerol-3-phosphate dehydrogenase family. In terms of assembly, homodimer. In terms of tissue distribution, isoform GPDH-1 is predominant in thorax and isoform GPDH-3 in abdomen.

It localises to the cytoplasm. It carries out the reaction sn-glycerol 3-phosphate + NAD(+) = dihydroxyacetone phosphate + NADH + H(+). It participates in phospholipid metabolism; alpha-glycerophosphate cycle. This chain is Glycerol-3-phosphate dehydrogenase [NAD(+)], cytoplasmic, found in Drosophila melanogaster (Fruit fly).